The chain runs to 791 residues: MALSVIRNNHIIFVLKQIGVRTKHRENNNSKYVESFTCDELERYIYSNPDCTLFETLKDEEYYSNVRVFFDVDMDGRLDDKYQATHNFVNIITKFVADYAYNDCKMISNHRDKDKMITDMKSNFSITESTDKEKTSFHLIFFNCYTTLDTLINMRKKLIVLTKESNNRLVKAIDTSVYRHKPSLRIVGTKKDSINIHVHKKTKQNIHFKNYLFTYVDYNEEDCYYFVSEQQHQSPDLLNWKEEYIPFHDAIKKISKAIGNSIINLKDITAENFTVTPLDIYYATPCNLCKKVSHKHPHHLLISNDCIRIYKSGNPNSCKIKTISLEGNKLFSISQQIIDLNVINVSDRGEYLVWLKNVWRMCEDDNNITKLILYMRDHLSSDCTDLLLCPRNRKVIEHNLKDMLIDTIETDTYPEKLQFLNGVYDIKDSIFYQGNDAKKFVCTVSTGYKYEEGINVDDITTELMSILDDIQPKTKENFENRELYEQILSSCLMGTTKQCIFFFYGETATGKSTTKKLLKSVMHNMFLETGQVILTEQMDKGPNPFIANMHLKRVVFCSELPDFSCNTSKKIRSDNIKKLTEPCVVGRSCYSNKINNRNHATIIIDTNYKPVFDKVDNAIMRRIALVNFKTHFTNTKKKVHNSKYDFIKPLNESLDSKIQSNYFRYAFLKILLGWFSKYHVPNLRILPTPDKIPDFKFRLKVESLIIPSNSTHVKYVDKLMKLGYITDDDGIPVLQLNIFQQKLSLHFNVKLYGQDIDSFIMKNKKYMNLADEYMSFIFIEDLNTINEPRNT.

Aspartate 174 is a catalytic residue. The segment at 346 to 471 (SDRGEYLVWL…ELMSILDDIQ (126 aa)) is primase. One can recognise an SF3 helicase domain in the interval 479 to 641 (ENRELYEQIL…FTNTKKKVHN (163 aa)). 505–512 (GETATGKS) is a binding site for ATP.

Belongs to the poxviridae D5 family. In terms of assembly, interacts with A20.

In terms of biological role, primase which may have roles in initiation of DNA replication or lagging-strand synthesis. This is Primase D5 from Fowlpox virus (strain NVSL) (FPV).